The chain runs to 147 residues: D-aminoacyl-tRNA deacylase (147 aa).

The short motif at G136–P137 is the Gly-cisPro motif, important for rejection of L-amino acids element.

Belongs to the DTD family. As to quaternary structure, homodimer.

The protein resides in the cytoplasm. It carries out the reaction glycyl-tRNA(Ala) + H2O = tRNA(Ala) + glycine + H(+). The catalysed reaction is a D-aminoacyl-tRNA + H2O = a tRNA + a D-alpha-amino acid + H(+). Functionally, an aminoacyl-tRNA editing enzyme that deacylates mischarged D-aminoacyl-tRNAs. Also deacylates mischarged glycyl-tRNA(Ala), protecting cells against glycine mischarging by AlaRS. Acts via tRNA-based rather than protein-based catalysis; rejects L-amino acids rather than detecting D-amino acids in the active site. By recycling D-aminoacyl-tRNA to D-amino acids and free tRNA molecules, this enzyme counteracts the toxicity associated with the formation of D-aminoacyl-tRNA entities in vivo and helps enforce protein L-homochirality. This Streptococcus equi subsp. equi (strain 4047) protein is D-aminoacyl-tRNA deacylase.